Consider the following 249-residue polypeptide: Putative SAP domain-containing protein 049L (249 aa).

3 stretches are compositionally biased toward basic and acidic residues: residues 1-12, 22-38, and 95-107; these read MAAPKAEGEDKP, PKPE…KEFC, and KKAE…KLDE. The tract at residues 1 to 110 is disordered; that stretch reads MAAPKAEGED…DDKKLDEATG (110 aa). Residues 119–153 form the SAP domain; it reads LSKLTIQTLKGMCKTRNLKISGNKAALVQRLIEAD.

The sequence is that of Putative SAP domain-containing protein 049L from Frog virus 3 (isolate Goorha) (FV-3).